We begin with the raw amino-acid sequence, 612 residues long: Dihydroxy-acid dehydratase (612 aa).

A Mg(2+)-binding site is contributed by Asp81. A [2Fe-2S] cluster-binding site is contributed by Cys122. Residues Asp123 and Lys124 each coordinate Mg(2+). At Lys124 the chain carries N6-carboxylysine. Residue Cys195 coordinates [2Fe-2S] cluster. Position 491 (Glu491) interacts with Mg(2+). The Proton acceptor role is filled by Ser517.

It belongs to the IlvD/Edd family. Homodimer. [2Fe-2S] cluster serves as cofactor. Mg(2+) is required as a cofactor.

The catalysed reaction is (2R)-2,3-dihydroxy-3-methylbutanoate = 3-methyl-2-oxobutanoate + H2O. The enzyme catalyses (2R,3R)-2,3-dihydroxy-3-methylpentanoate = (S)-3-methyl-2-oxopentanoate + H2O. It participates in amino-acid biosynthesis; L-isoleucine biosynthesis; L-isoleucine from 2-oxobutanoate: step 3/4. The protein operates within amino-acid biosynthesis; L-valine biosynthesis; L-valine from pyruvate: step 3/4. Functionally, functions in the biosynthesis of branched-chain amino acids. Catalyzes the dehydration of (2R,3R)-2,3-dihydroxy-3-methylpentanoate (2,3-dihydroxy-3-methylvalerate) into 2-oxo-3-methylpentanoate (2-oxo-3-methylvalerate) and of (2R)-2,3-dihydroxy-3-methylbutanoate (2,3-dihydroxyisovalerate) into 2-oxo-3-methylbutanoate (2-oxoisovalerate), the penultimate precursor to L-isoleucine and L-valine, respectively. This is Dihydroxy-acid dehydratase from Sinorhizobium fredii (strain NBRC 101917 / NGR234).